The following is a 369-amino-acid chain: Histidinol-phosphate aminotransferase (369 aa).

Lys-222 is modified (N6-(pyridoxal phosphate)lysine).

Belongs to the class-II pyridoxal-phosphate-dependent aminotransferase family. Histidinol-phosphate aminotransferase subfamily. As to quaternary structure, homodimer. The cofactor is pyridoxal 5'-phosphate.

The catalysed reaction is L-histidinol phosphate + 2-oxoglutarate = 3-(imidazol-4-yl)-2-oxopropyl phosphate + L-glutamate. It participates in amino-acid biosynthesis; L-histidine biosynthesis; L-histidine from 5-phospho-alpha-D-ribose 1-diphosphate: step 7/9. The chain is Histidinol-phosphate aminotransferase from Halalkalibacterium halodurans (strain ATCC BAA-125 / DSM 18197 / FERM 7344 / JCM 9153 / C-125) (Bacillus halodurans).